Reading from the N-terminus, the 513-residue chain is Zinc finger CCCH-type with G patch domain-containing protein (513 aa).

An N-acetylmethionine modification is found at M1. The tract at residues 90–131 (EVPVAPGAELETVPSRETGPGPTERGQEEDDGEDEEGGAALS) is disordered. Acidic residues predominate over residues 116 to 126 (QEEDDGEDEEG). The C3H1-type zinc-finger motif lies at 176-202 (KSLKPCSFFLEGKCRFQENCRFSHGQV). The segment at 267 to 296 (LPPLRTEPAGSSDSDGSDADDPSYARVVEP) is disordered. Residues S278 and S355 each carry the phosphoserine modification. Residues 315–361 (TRGIGSRLLAKMGYEFGKGLGRHAEGRVEPVHAVVLPRGKSLDQCAE) form the G-patch domain. 2 disordered regions span residues 367–394 (TRAG…PPPR) and 492–513 (AQEA…MTEF). Positions 497–513 (LQREQRKADTHKKMTEF) are enriched in basic and acidic residues.

In terms of assembly, interacts with CHD4/Mi-2; the interaction is direct.

Its subcellular location is the nucleus. Its function is as follows. Transcription repressor that specifically binds the 5'-GGAG[GA]A[GA]A-3' consensus sequence. Represses transcription by recruiting the chromatin multiprotein complex NuRD to target promoters. Negatively regulates expression of EGFR, a gene involved in cell proliferation, survival and migration. Its ability to repress genes of the EGFR pathway suggest it may act as a tumor suppressor. The polypeptide is Zinc finger CCCH-type with G patch domain-containing protein (ZGPAT) (Bos taurus (Bovine)).